The following is a 369-amino-acid chain: MVNPMVIGYIGSAAAIIGFGSNYVPVKKYPVGNGLSYAFILSIGGLCVAFIAMMIHGTFVFSPIGILGGSLWAMANLLIIPIIKLVGLGLGVLLWSSIGIVVGFFSGKFGWLGLEKQIVTHDWMNWLGFVGIVISIFCFFFIKPSLEDDNNNKNVVDRFKNKKGGYIDPMDNEEFPILRGSVNSDGPIKFNKYNNNNNNGDELETSTETIFDKIPTKFKKVAGISMSIICGVLLGVNMIPMQLWKQNHQEASPFDIIFSQFAGVFLFNAFTFMFYAMIKKSPQIYPKTVFPSFISGVMWGIANCGLMISTQNLGYTVGYPISCSGPMIISSLWSVFYFHEIKGTKNLLILCGSFLFLISGIILLAFSSF.

A run of 10 helical transmembrane segments spans residues 6-26, 35-55, 63-83, 85-105, 122-142, 221-241, 256-276, 288-308, 318-338, and 347-367; these read VIGY…YVPV, LSYA…AMMI, PIGI…IPII, LVGL…VGFF, DWMN…FFFI, VAGI…MIPM, IIFS…MFYA, TVFP…GLMI, GYPI…VFYF, and LLIL…LAFS.

Belongs to the TMEM144 family.

The protein localises to the membrane. The protein is Transmembrane protein 144 homolog A (tmem144A) of Dictyostelium discoideum (Social amoeba).